The sequence spans 425 residues: Probable sucrose-phosphatase 3a (425 aa).

Belongs to the sucrose phosphatase family. As to quaternary structure, homodimer. The cofactor is Mg(2+).

The enzyme catalyses sucrose 6(F)-phosphate + H2O = sucrose + phosphate. It participates in glycan biosynthesis; sucrose biosynthesis; sucrose from D-fructose 6-phosphate and UDP-alpha-D-glucose: step 2/2. In terms of biological role, catalyzes the final step of sucrose synthesis. The sequence is that of Probable sucrose-phosphatase 3a (SPP3A) from Arabidopsis thaliana (Mouse-ear cress).